A 509-amino-acid chain; its full sequence is Major envelope glycoprotein (509 aa).

The signal sequence occupies residues 1–17 (MVRTAVLILLLVRFSEP). N-linked (GlcNAc...) asparagine; by host glycans are attached at residues Asn34, Asn156, Asn194, Asn351, Asn381, and Asn423. Ser479 is lipidated: O-palmitoyl serine; by host. The chain crosses the membrane as a helical span at residues 480–502 (FMLGHAFSFMLTVGVIIFLFCMV). Residue Asn504 is glycosylated (N-linked (GlcNAc...) asparagine; by host).

Belongs to the baculoviridae gp64 family. Palmitoylated.

The protein localises to the virion membrane. Its subcellular location is the host cell membrane. Its function is as follows. Envelope phosphoglycoprotein which mediates the fusion of viral and host endosomal membranes leading to virus entry into the host cell. The sequence is that of Major envelope glycoprotein (GP67) from Choristoneura fumiferana nuclear polyhedrosis virus (CfMNPV).